Consider the following 385-residue polypeptide: Succinyl-diaminopimelate desuccinylase (385 aa).

H73 is a binding site for Zn(2+). Residue D75 is part of the active site. D106 is a binding site for Zn(2+). The active-site Proton acceptor is E141. 3 residues coordinate Zn(2+): E142, E170, and H359.

This sequence belongs to the peptidase M20A family. DapE subfamily. As to quaternary structure, homodimer. The cofactor is Zn(2+). It depends on Co(2+) as a cofactor.

It carries out the reaction N-succinyl-(2S,6S)-2,6-diaminopimelate + H2O = (2S,6S)-2,6-diaminopimelate + succinate. Its pathway is amino-acid biosynthesis; L-lysine biosynthesis via DAP pathway; LL-2,6-diaminopimelate from (S)-tetrahydrodipicolinate (succinylase route): step 3/3. Its function is as follows. Catalyzes the hydrolysis of N-succinyl-L,L-diaminopimelic acid (SDAP), forming succinate and LL-2,6-diaminopimelate (DAP), an intermediate involved in the bacterial biosynthesis of lysine and meso-diaminopimelic acid, an essential component of bacterial cell walls. In Methylorubrum extorquens (strain CM4 / NCIMB 13688) (Methylobacterium extorquens), this protein is Succinyl-diaminopimelate desuccinylase.